A 526-amino-acid polypeptide reads, in one-letter code: Peptide chain release factor 3 (526 aa).

The tr-type G domain occupies 8–277 (GKRRTFAIIS…GLTEWAPAPQ (270 aa)). GTP is bound by residues 17–24 (SHPDAGKT), 85–89 (DTPGH), and 139–142 (NKMD).

Belongs to the TRAFAC class translation factor GTPase superfamily. Classic translation factor GTPase family. PrfC subfamily.

The protein localises to the cytoplasm. Functionally, increases the formation of ribosomal termination complexes and stimulates activities of RF-1 and RF-2. It binds guanine nucleotides and has strong preference for UGA stop codons. It may interact directly with the ribosome. The stimulation of RF-1 and RF-2 is significantly reduced by GTP and GDP, but not by GMP. This chain is Peptide chain release factor 3, found in Aliivibrio salmonicida (strain LFI1238) (Vibrio salmonicida (strain LFI1238)).